The primary structure comprises 1156 residues: Nuclear pore-associated protein 1 (1156 aa).

8 disordered regions span residues 1–60, 155–204, 219–266, 481–515, 680–703, 732–786, 872–915, and 1026–1046; these read MGNL…RRPS, EGPR…FRCS, NSMS…PEPA, GGSY…TRES, TLVN…MHTT, NTQP…KTSL, STSF…SSFI, and APGP…SGTP. A compositionally biased stretch (basic residues) spans 50–59; the sequence is LFRRNARRRP. Residues 156–165 are compositionally biased toward basic and acidic residues; that stretch reads GPRRVKKDED. 2 stretches are compositionally biased toward polar residues: residues 179–197 and 219–231; these read PLSS…TQGD and NSMS…SPAS. Composition is skewed to polar residues over residues 680 to 692, 732 to 750, 884 to 915, and 1028 to 1046; these read TLVN…SSSK, NTQP…SLPA, TTTS…SSFI, and GPSS…SGTP.

In terms of assembly, associates with the nuclear pore complex (NPC). In terms of tissue distribution, testis-specific in adults. In fetal brain expressed only from the paternal allele.

Its subcellular location is the nucleus. The protein resides in the nucleoplasm. It is found in the nucleus inner membrane. Functionally, may be involved in spermatogenesis. The polypeptide is Nuclear pore-associated protein 1 (NPAP1) (Homo sapiens (Human)).